The primary structure comprises 312 residues: Olfactory receptor 4L1 (312 aa).

Topologically, residues 1–25 (MDLKNGSLVTEFILLGFFGRWELQI) are extracellular. The N-linked (GlcNAc...) asparagine glycan is linked to Asn5. Residues 26-49 (FFFVTFSLIYGATVMGNILIMVTV) form a helical membrane-spanning segment. Over 50-57 (TCRSTLHS) the chain is Cytoplasmic. The helical transmembrane segment at 58 to 79 (PLYFLLGNLSFLDMCLSTATTP) threads the bilayer. Residues 80-100 (KMIIDLLTDHKTISVWGCVTQ) lie on the Extracellular side of the membrane. The cysteines at positions 97 and 189 are disulfide-linked. The helical transmembrane segment at 101–120 (MFFMHFFGGAEMTLLIIMAF) threads the bilayer. The Cytoplasmic portion of the chain corresponds to 121–139 (DRYVAICKPLHYRTIMSHK). A helical membrane pass occupies residues 140–158 (LLKGFAILSWIIGFLHSIS). Residues 159 to 195 (QIVLTMNLPFCGHNVINNIFCDLPLVIKLACIETYTL) are Extracellular-facing. A helical membrane pass occupies residues 196–219 (ELFVIADSGLLSFTCFILLLVSYI). The Cytoplasmic portion of the chain corresponds to 220–235 (VILVSVPKKSSHGLSK). A helical membrane pass occupies residues 236–258 (ALSTLSAHIIVVTLFFGPCIFIY). Over 259 to 269 (VWPFSSLASNK) the chain is Extracellular. An N-linked (GlcNAc...) asparagine glycan is attached at Asn268. A helical membrane pass occupies residues 270 to 289 (TLAVFYTVITPLLNPSIYTL). Residues 290–312 (RNKKMQEAIRKLRFQYVSSAQNF) are Cytoplasmic-facing.

This sequence belongs to the G-protein coupled receptor 1 family.

The protein resides in the cell membrane. In terms of biological role, odorant receptor. This Homo sapiens (Human) protein is Olfactory receptor 4L1 (OR4L1).